We begin with the raw amino-acid sequence, 440 residues long: Probable exopolygalacturonase C (440 aa).

Positions 1–19 are cleaved as a signal peptide; sequence MSVFKASFLFLLSSSLVHG. Asparagine 82 and asparagine 99 each carry an N-linked (GlcNAc...) asparagine glycan. PbH1 repeat units lie at residues 215-236, 238-259, and 265-288; these read GTNIQITDSIMYNGDDAIAVGA, SHDTLFTRNTIGYQTHGMSIGS, and TDFANISNIRFDDVTVVDGLYAAR. Residue aspartate 229 is the Proton donor of the active site. Histidine 253 is a catalytic residue. 4 N-linked (GlcNAc...) asparagine glycosylation sites follow: asparagine 269, asparagine 301, asparagine 311, and asparagine 334. Cysteine 387 and cysteine 393 are oxidised to a cystine. Asparagine 417 and asparagine 432 each carry an N-linked (GlcNAc...) asparagine glycan.

Belongs to the glycosyl hydrolase 28 family.

It is found in the secreted. The enzyme catalyses [(1-&gt;4)-alpha-D-galacturonosyl](n) + H2O = alpha-D-galacturonate + [(1-&gt;4)-alpha-D-galacturonosyl](n-1). Functionally, specific in hydrolyzing the terminal glycosidic bond of polygalacturonic acid and oligogalacturonates. The sequence is that of Probable exopolygalacturonase C (pgxC) from Aspergillus niger (strain ATCC MYA-4892 / CBS 513.88 / FGSC A1513).